We begin with the raw amino-acid sequence, 68 residues long: Protein transport protein Sec61 subunit gamma (68 aa).

The Cytoplasmic segment spans residues 1–32 (MDQVMAWVEPGKQFAKDSIRLVKRCTKPDRKE). A helical membrane pass occupies residues 33 to 61 (FQKIAVATAIGFAIMGFIGFFVKLIHIPI). Over 62–68 (NNIIVGS) the chain is Extracellular.

It belongs to the SecE/SEC61-gamma family. As to quaternary structure, heterotrimeric complex composed of SEC61-alpha, SEC61-beta and SEC61-gamma. Component of the ribosome-associated ER translocon complex.

The protein resides in the endoplasmic reticulum membrane. Functionally, necessary for protein translocation in the endoplasmic reticulum and multi-pass membrane protein biogenesis. The chain is Protein transport protein Sec61 subunit gamma (SEC61G) from Ciona intestinalis (Transparent sea squirt).